The primary structure comprises 197 residues: Shikimate kinase (197 aa).

14–19 (GSGKST) contacts ATP. S18 is a Mg(2+) binding site. The substrate site is built by D36, R60, and G82. ATP is bound at residue R120. R147 serves as a coordination point for substrate.

It belongs to the shikimate kinase family. In terms of assembly, monomer. Mg(2+) is required as a cofactor.

It is found in the cytoplasm. The catalysed reaction is shikimate + ATP = 3-phosphoshikimate + ADP + H(+). Its pathway is metabolic intermediate biosynthesis; chorismate biosynthesis; chorismate from D-erythrose 4-phosphate and phosphoenolpyruvate: step 5/7. In terms of biological role, catalyzes the specific phosphorylation of the 3-hydroxyl group of shikimic acid using ATP as a cosubstrate. The chain is Shikimate kinase from Prosthecochloris aestuarii (strain DSM 271 / SK 413).